Reading from the N-terminus, the 529-residue chain is 2-(3-amino-3-carboxypropyl)histidine synthase subunit 2-2 (529 aa).

Residues cysteine 130, cysteine 151, and cysteine 366 each coordinate [4Fe-4S] cluster.

The protein belongs to the DPH1/DPH2 family. DPH2 subfamily. As to quaternary structure, component of the 2-(3-amino-3-carboxypropyl)histidine synthase complex composed of DPH1, DPH2, DPH3 and a NADH-dependent reductase, predominantly CBR1. [4Fe-4S] cluster serves as cofactor.

The protein localises to the cytoplasm. Its pathway is protein modification; peptidyl-diphthamide biosynthesis. Functionally, required for the first step of diphthamide biosynthesis, a post-translational modification of histidine which occurs in elongation factor 2. DPH1 and DPH2 transfer a 3-amino-3-carboxypropyl (ACP) group from S-adenosyl-L-methionine (SAM) to a histidine residue, the reaction is assisted by a reduction system comprising DPH3 and a NADH-dependent reductase, predominantly CBR1. Facilitates the reduction of the catalytic iron-sulfur cluster found in the DPH1 subunit. In Candida albicans (strain SC5314 / ATCC MYA-2876) (Yeast), this protein is 2-(3-amino-3-carboxypropyl)histidine synthase subunit 2-2.